The chain runs to 387 residues: Chorismate synthase (387 aa).

2 residues coordinate NADP(+): Arg42 and Arg48. FMN-binding positions include Arg131–Ser133, Gln251–Ala252, Gly295, Lys310–Thr314, and Arg336.

The protein belongs to the chorismate synthase family. As to quaternary structure, homotetramer. Requires FMNH2 as cofactor.

The catalysed reaction is 5-O-(1-carboxyvinyl)-3-phosphoshikimate = chorismate + phosphate. The protein operates within metabolic intermediate biosynthesis; chorismate biosynthesis; chorismate from D-erythrose 4-phosphate and phosphoenolpyruvate: step 7/7. In terms of biological role, catalyzes the anti-1,4-elimination of the C-3 phosphate and the C-6 proR hydrogen from 5-enolpyruvylshikimate-3-phosphate (EPSP) to yield chorismate, which is the branch point compound that serves as the starting substrate for the three terminal pathways of aromatic amino acid biosynthesis. This reaction introduces a second double bond into the aromatic ring system. This is Chorismate synthase from Syntrophotalea carbinolica (strain DSM 2380 / NBRC 103641 / GraBd1) (Pelobacter carbinolicus).